A 565-amino-acid chain; its full sequence is NAD-dependent malic enzyme (565 aa).

Catalysis depends on Tyr104, which acts as the Proton donor. Arg157 contributes to the NAD(+) binding site. Lys175 serves as the catalytic Proton acceptor. A divalent metal cation contacts are provided by Glu246, Asp247, and Asp270. 2 residues coordinate NAD(+): Asp270 and Asn418.

It belongs to the malic enzymes family. Homotetramer. It depends on Mg(2+) as a cofactor. Mn(2+) serves as cofactor.

It carries out the reaction (S)-malate + NAD(+) = pyruvate + CO2 + NADH. It catalyses the reaction oxaloacetate + H(+) = pyruvate + CO2. In Escherichia coli O127:H6 (strain E2348/69 / EPEC), this protein is NAD-dependent malic enzyme.